Consider the following 125-residue polypeptide: Ribosome-binding factor A (125 aa).

The protein belongs to the RbfA family. In terms of assembly, monomer. Binds 30S ribosomal subunits, but not 50S ribosomal subunits or 70S ribosomes.

It is found in the cytoplasm. Functionally, one of several proteins that assist in the late maturation steps of the functional core of the 30S ribosomal subunit. Associates with free 30S ribosomal subunits (but not with 30S subunits that are part of 70S ribosomes or polysomes). Required for efficient processing of 16S rRNA. May interact with the 5'-terminal helix region of 16S rRNA. The sequence is that of Ribosome-binding factor A from Kosmotoga olearia (strain ATCC BAA-1733 / DSM 21960 / TBF 19.5.1).